Consider the following 261-residue polypeptide: Cytochrome c oxidase subunit 3 (261 aa).

Residues 1–15 (MTHQTHAYHMVNPSP) are Mitochondrial matrix-facing. The chain crosses the membrane as a helical span at residues 16–34 (WPLTGALSALLMTSGLTMW). Residues 35-40 (FHFNSM) lie on the Mitochondrial intermembrane side of the membrane. A helical transmembrane segment spans residues 41–66 (TLLTLGLTTNMLTMYQWWRDIIREST). Topologically, residues 67–72 (FQGHHT) are mitochondrial matrix. Residues 73 to 105 (PNVQKGLRYGMILFIISEVLFFTGFFWAFYHSS) form a helical membrane-spanning segment. The Mitochondrial intermembrane segment spans residues 106 to 128 (LAPTPELGGCWPPTGIHPLNPLE). A helical transmembrane segment spans residues 129–152 (VPLLNTSVLLASGVSITWAHHSLM). Over 153 to 155 (EGN) the chain is Mitochondrial matrix. A helical transmembrane segment spans residues 156–183 (RNHMLQALFITISLGVYFTLLQASEYYE). Over 184–190 (APFTISD) the chain is Mitochondrial intermembrane. Residues 191 to 223 (GVYGSTFFVATGFHGLHVIIGSTFLIVCFFRQL) form a helical membrane-spanning segment. Topologically, residues 224–232 (KFHFTSNHH) are mitochondrial matrix. Residues 233-256 (FGFEAAAWYWHFVDVVWLFLYVSI) form a helical membrane-spanning segment. The Mitochondrial intermembrane segment spans residues 257–261 (YWWGS).

Belongs to the cytochrome c oxidase subunit 3 family. Component of the cytochrome c oxidase (complex IV, CIV), a multisubunit enzyme composed of 14 subunits. The complex is composed of a catalytic core of 3 subunits MT-CO1, MT-CO2 and MT-CO3, encoded in the mitochondrial DNA, and 11 supernumerary subunits COX4I, COX5A, COX5B, COX6A, COX6B, COX6C, COX7A, COX7B, COX7C, COX8 and NDUFA4, which are encoded in the nuclear genome. The complex exists as a monomer or a dimer and forms supercomplexes (SCs) in the inner mitochondrial membrane with NADH-ubiquinone oxidoreductase (complex I, CI) and ubiquinol-cytochrome c oxidoreductase (cytochrome b-c1 complex, complex III, CIII), resulting in different assemblies (supercomplex SCI(1)III(2)IV(1) and megacomplex MCI(2)III(2)IV(2)).

It is found in the mitochondrion inner membrane. The enzyme catalyses 4 Fe(II)-[cytochrome c] + O2 + 8 H(+)(in) = 4 Fe(III)-[cytochrome c] + 2 H2O + 4 H(+)(out). In terms of biological role, component of the cytochrome c oxidase, the last enzyme in the mitochondrial electron transport chain which drives oxidative phosphorylation. The respiratory chain contains 3 multisubunit complexes succinate dehydrogenase (complex II, CII), ubiquinol-cytochrome c oxidoreductase (cytochrome b-c1 complex, complex III, CIII) and cytochrome c oxidase (complex IV, CIV), that cooperate to transfer electrons derived from NADH and succinate to molecular oxygen, creating an electrochemical gradient over the inner membrane that drives transmembrane transport and the ATP synthase. Cytochrome c oxidase is the component of the respiratory chain that catalyzes the reduction of oxygen to water. Electrons originating from reduced cytochrome c in the intermembrane space (IMS) are transferred via the dinuclear copper A center (CU(A)) of subunit 2 and heme A of subunit 1 to the active site in subunit 1, a binuclear center (BNC) formed by heme A3 and copper B (CU(B)). The BNC reduces molecular oxygen to 2 water molecules using 4 electrons from cytochrome c in the IMS and 4 protons from the mitochondrial matrix. The protein is Cytochrome c oxidase subunit 3 (MT-CO3) of Antidorcas marsupialis (Springbok).